The chain runs to 324 residues: Probable cell division protein WhiA (324 aa).

A DNA-binding region (H-T-H motif) is located at residues Thr-276–Asn-310.

This sequence belongs to the WhiA family.

In terms of biological role, involved in cell division and chromosome segregation. The polypeptide is Probable cell division protein WhiA (Shouchella clausii (strain KSM-K16) (Alkalihalobacillus clausii)).